Reading from the N-terminus, the 610-residue chain is UvrABC system protein C (610 aa).

The GIY-YIG domain occupies serine 16 to valine 94. One can recognise a UVR domain in the interval aspartate 204–valine 239.

This sequence belongs to the UvrC family. As to quaternary structure, interacts with UvrB in an incision complex.

It is found in the cytoplasm. The UvrABC repair system catalyzes the recognition and processing of DNA lesions. UvrC both incises the 5' and 3' sides of the lesion. The N-terminal half is responsible for the 3' incision and the C-terminal half is responsible for the 5' incision. In Salmonella heidelberg (strain SL476), this protein is UvrABC system protein C.